The chain runs to 397 residues: uncharacterized protein (397 aa).

11 consecutive transmembrane segments (helical) span residues 9–29, 38–58, 85–105, 112–132, 148–168, 182–202, 226–246, 271–291, 310–330, 331–351, and 365–385; these read NAVL…GFLT, LLAS…GAQL, FLAA…VGGA, IFGI…ILIF, MGFI…PPVV, PIAI…FAGA, AILI…GVVS, VLFG…AAYT, WIIA…KPAA, VLVF…ALIL, and HPVF…ILSG.

It belongs to the NRAMP family.

The protein localises to the cell membrane. This is an uncharacterized protein from Haemophilus influenzae (strain ATCC 51907 / DSM 11121 / KW20 / Rd).